A 123-amino-acid chain; its full sequence is Cytochrome b-c1 complex subunit 7 (123 aa).

Belongs to the UQCRB/QCR7 family. As to quaternary structure, component of the ubiquinol-cytochrome c oxidoreductase (cytochrome b-c1 complex, complex III, CIII), a multisubunit enzyme composed of 3 respiratory subunits cytochrome b, cytochrome c1 and Rieske protein, 2 core protein subunits, and additional low-molecular weight protein subunits. The complex exists as an obligatory dimer and forms supercomplexes (SCs) in the inner mitochondrial membrane with cytochrome c oxidase (complex IV, CIV). In terms of processing, the N-terminus is blocked.

It localises to the mitochondrion inner membrane. In terms of biological role, component of the ubiquinol-cytochrome c oxidoreductase, a multisubunit transmembrane complex that is part of the mitochondrial electron transport chain which drives oxidative phosphorylation. The respiratory chain contains 3 multisubunit complexes succinate dehydrogenase (complex II, CII), ubiquinol-cytochrome c oxidoreductase (cytochrome b-c1 complex, complex III, CIII) and cytochrome c oxidase (complex IV, CIV), that cooperate to transfer electrons derived from NADH and succinate to molecular oxygen, creating an electrochemical gradient over the inner membrane that drives transmembrane transport and the ATP synthase. The cytochrome b-c1 complex catalyzes electron transfer from ubiquinol to cytochrome c, linking this redox reaction to translocation of protons across the mitochondrial inner membrane, with protons being carried across the membrane as hydrogens on the quinol. In the process called Q cycle, 2 protons are consumed from the matrix, 4 protons are released into the intermembrane space and 2 electrons are passed to cytochrome c. This Solanum tuberosum (Potato) protein is Cytochrome b-c1 complex subunit 7.